Reading from the N-terminus, the 647-residue chain is XK-related protein 4 (647 aa).

Residues 1–15 show a composition bias toward basic and acidic residues; sequence MAAKSDGRLKMKKSS. Residues 1–44 are disordered; that stretch reads MAAKSDGRLKMKKSSDVAFTPLQNSDNSGSVQGLAPGLPSGSGA. The segment covering 21–31 has biased composition (polar residues); that stretch reads PLQNSDNSGSV. 2 consecutive transmembrane segments (helical) span residues 112–132 and 142–162; these read WILA…WLAV and WFGL…VFSF. At serine 197 the chain carries Phosphoserine. Residues 197–238 are disordered; sequence SAAGEGEVRPSTPQRQASNASKSNIAATNSGSNSNGATRTSG. Polar residues predominate over residues 207-236; it reads STPQRQASNASKSNIAATNSGSNSNGATRT. The next 8 membrane-spanning stretches (helical) occupy residues 245 to 265, 303 to 323, 328 to 348, 362 to 382, 393 to 415, 425 to 445, 454 to 474, and 484 to 504; these read CSFC…GQIW, HLLA…CIIV, LQAL…WALA, KPIS…TIAA, VFQL…WIVH, WEEI…WFNV, LFIY…LWYL, and FAIP…VFML.

The protein belongs to the XK family. As to quaternary structure, homodimer; homodimerization takes place upon caspase cleavage. Interacts with the processed C-terminus of XRCC4 (protein XRCC4, C-terminus); interaction promotes the phospholipid scramblase activity. Post-translationally, undergoes proteolytic processing by caspase-3 (CASP3), caspase-6 (CASP6) and caspase-7 (CASP7) to generate the XK-related protein 4, processed form, leading to its activation. As to expression, highly expressed in expressed in the brain; weakly expressed in the spleen, thymus, uterus, blood vessels and fetus.

The protein resides in the cell membrane. It carries out the reaction a 1,2-diacyl-sn-glycero-3-phospho-L-serine(in) = a 1,2-diacyl-sn-glycero-3-phospho-L-serine(out). With respect to regulation, phospholipid scramblase activity is activated upon caspase cleavage to generate the XK-related protein 4, processed form. Does not act prior the onset of apoptosis. Homodimerizes upon caspase cleavage. Phospholipid scramblase activity is activated following interaction with the processed C-terminus of XRCC4 (protein XRCC4, C-terminus). Phospholipid scramblase that promotes phosphatidylserine exposure on apoptotic cell surface. Phosphatidylserine is a specific marker only present at the surface of apoptotic cells and acts as a specific signal for engulfment. This chain is XK-related protein 4, found in Mus musculus (Mouse).